Here is a 165-residue protein sequence, read N- to C-terminus: Pro-MCH (165 aa).

A signal peptide spans 1–21; that stretch reads MAKMNLSSYILILTFSLFSQG. Residue isoleucine 143 is modified to Isoleucine amide. A disulfide bond links cysteine 153 and cysteine 162.

The protein belongs to the melanin-concentrating hormone family. Post-translationally, differentially processed in the brain and in peripheral organs producing two neuropeptides; NEI and MCH. A third peptide, NGE, may also be produced. Preferential processing in neurons by prohormone convertase 2 (PC2) generates NEI. MCH is generated in neurons of the lateral hypothalmic area by several prohormone convertases including PC1/3, PC2 and PC5/6. Predominantly expressed in lateral hypothalamus, also detected in pallidum, neocortex and cerebellum. Also found in thymus, brown adipose tissue, duodenum and testis (spermatogonia, early spermatocytes and Sertoli cells). No expression in peripheral blood. In brain exclusively mature MCH and NEI peptides are present. In peripheral tissues a large product, encompassing the NEI and MCH domains of the precursor, is found predominantly.

The protein resides in the secreted. Its function is as follows. MCH may act as a neurotransmitter or neuromodulator in a broad array of neuronal functions directed toward the regulation of goal-directed behavior, such as food intake, and general arousal. May also have a role in spermatocyte differentiation. The polypeptide is Pro-MCH (PMCH) (Homo sapiens (Human)).